We begin with the raw amino-acid sequence, 73 residues long: Translation initiation factor IF-1 (73 aa).

Positions 1–73 (MAKKDGVIEI…TRGRIVYRYK (73 aa)) constitute an S1-like domain.

It belongs to the IF-1 family. As to quaternary structure, component of the 30S ribosomal translation pre-initiation complex which assembles on the 30S ribosome in the order IF-2 and IF-3, IF-1 and N-formylmethionyl-tRNA(fMet); mRNA recruitment can occur at any time during PIC assembly.

It is found in the cytoplasm. One of the essential components for the initiation of protein synthesis. Stabilizes the binding of IF-2 and IF-3 on the 30S subunit to which N-formylmethionyl-tRNA(fMet) subsequently binds. Helps modulate mRNA selection, yielding the 30S pre-initiation complex (PIC). Upon addition of the 50S ribosomal subunit IF-1, IF-2 and IF-3 are released leaving the mature 70S translation initiation complex. The protein is Translation initiation factor IF-1 of Leifsonia xyli subsp. xyli (strain CTCB07).